We begin with the raw amino-acid sequence, 142 residues long: Augurin-A (142 aa).

An N-terminal signal peptide occupies residues 1 to 28 (MLSEKFHLRLLTLLTLLTALSLTDVASE). Propeptides lie at residues 29–66 (SKLE…LKRP) and 127–142 (GAAS…YDYY).

The protein belongs to the augurin family.

It is found in the secreted. The protein localises to the cytoplasm. It localises to the apical cell membrane. In terms of biological role, probable hormone. Required for the proper formation of the central nervous system by attenuating cell proliferation during development. This is Augurin-A from Danio rerio (Zebrafish).